Consider the following 134-residue polypeptide: Cytochrome c-type biogenesis protein CcmE (134 aa).

The Cytoplasmic segment spans residues 1-7 (MKRKYRR). The helical; Signal-anchor for type II membrane protein transmembrane segment at 8–28 (LFVVIITLSIFAGSVVLVLGK) threads the bilayer. Topologically, residues 29–134 (LKNNVSFFYT…MPNKYKTNDL (106 aa)) are periplasmic. 2 residues coordinate heme: histidine 120 and tyrosine 124.

It belongs to the CcmE/CycJ family.

It localises to the cell inner membrane. Functionally, heme chaperone required for the biogenesis of c-type cytochromes. Transiently binds heme delivered by CcmC and transfers the heme to apo-cytochromes in a process facilitated by CcmF and CcmH. In Ehrlichia ruminantium (strain Welgevonden), this protein is Cytochrome c-type biogenesis protein CcmE.